Consider the following 218-residue polypeptide: Uracil-DNA glycosylase (218 aa).

This sequence belongs to the uracil-DNA glycosylase (UDG) superfamily. UNG family. As to quaternary structure, homodimer. Interacts with protein OPG148. Component of the Uracil-DNA glycosylase(UDG)-OPG148-polymerase complex; OPG148 and UDG form a heterodimeric processivity factor that associates with OPG71 to form the processive polymerase holoenzyme.

It carries out the reaction Hydrolyzes single-stranded DNA or mismatched double-stranded DNA and polynucleotides, releasing free uracil.. Functionally, plays an essential role in viral replication as a component of the DNA polymerase processivity factor. Excises uracil residues from the DNA which can arise as a result of misincorporation of dUMP residues by DNA polymerase or due to deamination of cytosine. The sequence is that of Uracil-DNA glycosylase (OPG116) from Monkeypox virus.